A 536-amino-acid polypeptide reads, in one-letter code: Pentatricopeptide repeat-containing protein At2g06000 (536 aa).

PPR repeat units follow at residues 102–136 (SFWT…GVSP), 137–167 (NNRL…SFEV), 170–200 (CCMV…HLRF), 205–239 (DTKT…GCEP), 240–274 (DIVT…SVCS), 276–310 (DVVT…GIYP), 311–345 (TNVT…GCFP), 346–380 (DVVT…GMFP), 381–415 (NAFT…DIIP), 416–450 (QPFM…KCKP), 451–485 (DKIT…GCSP), and 486–523 (DKIT…NVVP).

This sequence belongs to the PPR family. P subfamily.

The sequence is that of Pentatricopeptide repeat-containing protein At2g06000 from Arabidopsis thaliana (Mouse-ear cress).